The chain runs to 425 residues: 3-phosphoshikimate 1-carboxyvinyltransferase (425 aa).

Residues Lys-23, Ser-24, and Arg-28 each contribute to the 3-phosphoshikimate site. Residue Lys-23 coordinates phosphoenolpyruvate. Gly-96 and Arg-124 together coordinate phosphoenolpyruvate. Residues Thr-170, Ser-171, Gln-172, Ser-198, Asp-314, and Lys-341 each contribute to the 3-phosphoshikimate site. Gln-172 contacts phosphoenolpyruvate. The active-site Proton acceptor is Asp-314. Residues Arg-345, Arg-386, and Lys-411 each coordinate phosphoenolpyruvate.

This sequence belongs to the EPSP synthase family. Monomer.

It localises to the cytoplasm. The enzyme catalyses 3-phosphoshikimate + phosphoenolpyruvate = 5-O-(1-carboxyvinyl)-3-phosphoshikimate + phosphate. Its pathway is metabolic intermediate biosynthesis; chorismate biosynthesis; chorismate from D-erythrose 4-phosphate and phosphoenolpyruvate: step 6/7. Catalyzes the transfer of the enolpyruvyl moiety of phosphoenolpyruvate (PEP) to the 5-hydroxyl of shikimate-3-phosphate (S3P) to produce enolpyruvyl shikimate-3-phosphate and inorganic phosphate. This is 3-phosphoshikimate 1-carboxyvinyltransferase from Nostoc sp. (strain PCC 7120 / SAG 25.82 / UTEX 2576).